The chain runs to 660 residues: DNA mismatch repair protein MutL (660 aa).

This sequence belongs to the DNA mismatch repair MutL/HexB family.

This protein is involved in the repair of mismatches in DNA. It is required for dam-dependent methyl-directed DNA mismatch repair. May act as a 'molecular matchmaker', a protein that promotes the formation of a stable complex between two or more DNA-binding proteins in an ATP-dependent manner without itself being part of a final effector complex. The protein is DNA mismatch repair protein MutL of Streptococcus pyogenes serotype M3 (strain ATCC BAA-595 / MGAS315).